Reading from the N-terminus, the 138-residue chain is High mobility group B protein 4 (138 aa).

Disordered stretches follow at residues 1-41 and 105-138; these read MKGG…PPSA and LKLA…EDDD. Over residues 18 to 29 the composition is skewed to basic residues; it reads KTRGRKAGKKTK. Positions 35–104 form a DNA-binding region, HMG box; sequence PKRPPSAFFV…EYIKNVQQYN (70 aa). 2 positions are modified to phosphoserine: serine 123 and serine 130. A compositionally biased stretch (acidic residues) spans 126–138; the sequence is DEAVSEEEAEDDD.

The protein belongs to the HMGB family. As to expression, mostly expressed roots and flowers, and, to a lower extent, in stems and leaves.

It is found in the nucleus. The protein localises to the cytoplasm. It localises to the cytosol. Binds preferentially double-stranded DNA. This chain is High mobility group B protein 4 (HMGB4), found in Arabidopsis thaliana (Mouse-ear cress).